Here is a 407-residue protein sequence, read N- to C-terminus: Ribosomal protein uL3-like (407 aa).

A compositionally biased stretch (basic residues) spans 1–31; sequence MSHRKFSAPRHGHLGFLPHKRSHRHRGKVKT. 2 disordered regions span residues 1–35 and 387–407; these read MSHR…WPRD and AFMG…SGDL.

The protein belongs to the universal ribosomal protein uL3 family. Component of the large ribosomal subunit in striated muscle cells.

Heart- and skeletal muscle-specific component of the ribosome, which regulates muscle function. Component of the large ribosomal subunit in striated muscle cells: replaces the RPL3 paralog in the ribosome in these cells. The ribosome is a large ribonucleoprotein complex responsible for the synthesis of proteins in the cell. Inhibits myotube growth and muscle function. The polypeptide is Ribosomal protein uL3-like (Homo sapiens (Human)).